We begin with the raw amino-acid sequence, 372 residues long: Glutamate 5-kinase (372 aa).

Residue Lys14 participates in ATP binding. Substrate is bound by residues Ser54, Asp141, and Asn153. An ATP-binding site is contributed by 173-174 (TD). The region spanning 280-358 (RGHVVIDDGA…GEIESVLGYM (79 aa)) is the PUA domain.

It belongs to the glutamate 5-kinase family.

The protein resides in the cytoplasm. The catalysed reaction is L-glutamate + ATP = L-glutamyl 5-phosphate + ADP. It functions in the pathway amino-acid biosynthesis; L-proline biosynthesis; L-glutamate 5-semialdehyde from L-glutamate: step 1/2. Its function is as follows. Catalyzes the transfer of a phosphate group to glutamate to form L-glutamate 5-phosphate. The sequence is that of Glutamate 5-kinase from Paraburkholderia phymatum (strain DSM 17167 / CIP 108236 / LMG 21445 / STM815) (Burkholderia phymatum).